Here is a 67-residue protein sequence, read N- to C-terminus: Small ribosomal subunit protein bS21 (67 aa).

Belongs to the bacterial ribosomal protein bS21 family.

The chain is Small ribosomal subunit protein bS21 (rpsU) from Aquifex aeolicus (strain VF5).